Consider the following 435-residue polypeptide: Nicotinate phosphoribosyltransferase (435 aa).

Position 230 is a phosphohistidine; by autocatalysis (His230).

This sequence belongs to the NAPRTase family. Transiently phosphorylated on a His residue during the reaction cycle. Phosphorylation strongly increases the affinity for substrates and increases the rate of nicotinate D-ribonucleotide production. Dephosphorylation regenerates the low-affinity form of the enzyme, leading to product release.

It catalyses the reaction nicotinate + 5-phospho-alpha-D-ribose 1-diphosphate + ATP + H2O = nicotinate beta-D-ribonucleotide + ADP + phosphate + diphosphate. Its pathway is cofactor biosynthesis; NAD(+) biosynthesis; nicotinate D-ribonucleotide from nicotinate: step 1/1. In terms of biological role, catalyzes the synthesis of beta-nicotinate D-ribonucleotide from nicotinate and 5-phospho-D-ribose 1-phosphate at the expense of ATP. The sequence is that of Nicotinate phosphoribosyltransferase from Vibrio cholerae serotype O1 (strain ATCC 39541 / Classical Ogawa 395 / O395).